A 117-amino-acid polypeptide reads, in one-letter code: Large ribosomal subunit protein eL18 (117 aa).

The protein belongs to the eukaryotic ribosomal protein eL18 family.

The sequence is that of Large ribosomal subunit protein eL18 from Halobacterium salinarum (strain ATCC 29341 / DSM 671 / R1).